The primary structure comprises 309 residues: Aspartate carbamoyltransferase catalytic subunit (309 aa).

Carbamoyl phosphate is bound by residues arginine 58 and threonine 59. Position 86 (lysine 86) interacts with L-aspartate. The carbamoyl phosphate site is built by arginine 108, histidine 136, and glutamine 139. The L-aspartate site is built by arginine 170 and arginine 224. Carbamoyl phosphate contacts are provided by glycine 266 and proline 267.

Belongs to the aspartate/ornithine carbamoyltransferase superfamily. ATCase family. Heterododecamer (2C3:3R2) of six catalytic PyrB chains organized as two trimers (C3), and six regulatory PyrI chains organized as three dimers (R2).

It carries out the reaction carbamoyl phosphate + L-aspartate = N-carbamoyl-L-aspartate + phosphate + H(+). It functions in the pathway pyrimidine metabolism; UMP biosynthesis via de novo pathway; (S)-dihydroorotate from bicarbonate: step 2/3. In terms of biological role, catalyzes the condensation of carbamoyl phosphate and aspartate to form carbamoyl aspartate and inorganic phosphate, the committed step in the de novo pyrimidine nucleotide biosynthesis pathway. The sequence is that of Aspartate carbamoyltransferase catalytic subunit from Campylobacter concisus (strain 13826).